Consider the following 382-residue polypeptide: Pyrimidine monooxygenase RutA (382 aa).

FMN contacts are provided by residues 68–69, N134, E143, 159–160, and S209; these read IK and RY.

Belongs to the NtaA/SnaA/DszA monooxygenase family. RutA subfamily.

The enzyme catalyses uracil + FMNH2 + NADH + O2 = (Z)-3-ureidoacrylate + FMN + NAD(+) + H2O + H(+). It catalyses the reaction thymine + FMNH2 + NADH + O2 = (Z)-2-methylureidoacrylate + FMN + NAD(+) + H2O + H(+). Catalyzes the pyrimidine ring opening between N-3 and C-4 by an unusual flavin hydroperoxide-catalyzed mechanism, adding oxygen atoms in the process to yield ureidoacrylate peracid, that immediately reacts with FMN forming ureidoacrylate and FMN-N(5)-oxide. The FMN-N(5)-oxide reacts spontaneously with NADH to produce FMN. Requires the flavin reductase RutF to regenerate FMN in vivo. The sequence is that of Pyrimidine monooxygenase RutA from Escherichia coli (strain K12 / MC4100 / BW2952).